A 368-amino-acid chain; its full sequence is tRNA-specific 2-thiouridylase MnmA (368 aa).

ATP is bound by residues 14-21 (AMSGGVDS) and leucine 40. The active-site Nucleophile is cysteine 108. Cysteines 108 and 204 form a disulfide. Position 132 (glycine 132) interacts with ATP. The segment at 154–156 (KDQ) is interaction with tRNA. Cysteine 204 functions as the Cysteine persulfide intermediate in the catalytic mechanism.

This sequence belongs to the MnmA/TRMU family.

The protein localises to the cytoplasm. It carries out the reaction S-sulfanyl-L-cysteinyl-[protein] + uridine(34) in tRNA + AH2 + ATP = 2-thiouridine(34) in tRNA + L-cysteinyl-[protein] + A + AMP + diphosphate + H(+). Its function is as follows. Catalyzes the 2-thiolation of uridine at the wobble position (U34) of tRNA, leading to the formation of s(2)U34. This is tRNA-specific 2-thiouridylase MnmA from Rickettsia canadensis (strain McKiel).